Reading from the N-terminus, the 338-residue chain is Glycerol-3-phosphate dehydrogenase [NAD(P)+] (338 aa).

NADPH-binding residues include Ser-12, Trp-13, and Lys-110. The sn-glycerol 3-phosphate site is built by Lys-110, Gly-141, and Ser-143. An NADPH-binding site is contributed by Ala-145. Residues Lys-196, Asp-249, Ser-259, Arg-260, and Asn-261 each contribute to the sn-glycerol 3-phosphate site. Residue Lys-196 is the Proton acceptor of the active site. Position 260 (Arg-260) interacts with NADPH. NADPH-binding residues include Val-284 and Glu-286.

This sequence belongs to the NAD-dependent glycerol-3-phosphate dehydrogenase family.

It localises to the cytoplasm. The enzyme catalyses sn-glycerol 3-phosphate + NAD(+) = dihydroxyacetone phosphate + NADH + H(+). It carries out the reaction sn-glycerol 3-phosphate + NADP(+) = dihydroxyacetone phosphate + NADPH + H(+). Its pathway is membrane lipid metabolism; glycerophospholipid metabolism. Functionally, catalyzes the reduction of the glycolytic intermediate dihydroxyacetone phosphate (DHAP) to sn-glycerol 3-phosphate (G3P), the key precursor for phospholipid synthesis. The polypeptide is Glycerol-3-phosphate dehydrogenase [NAD(P)+] (Pediococcus pentosaceus (strain ATCC 25745 / CCUG 21536 / LMG 10740 / 183-1w)).